The sequence spans 400 residues: Phosphoglycerate kinase (400 aa).

Substrate is bound by residues 22-24 (DFN), arginine 38, 61-64 (HLGR), arginine 119, and arginine 152. Residues lysine 205, glycine 296, glutamate 327, and 353–356 (GGDT) each bind ATP.

Belongs to the phosphoglycerate kinase family. In terms of assembly, monomer.

The protein localises to the cytoplasm. The catalysed reaction is (2R)-3-phosphoglycerate + ATP = (2R)-3-phospho-glyceroyl phosphate + ADP. Its pathway is carbohydrate degradation; glycolysis; pyruvate from D-glyceraldehyde 3-phosphate: step 2/5. The polypeptide is Phosphoglycerate kinase (Campylobacter jejuni subsp. jejuni serotype O:2 (strain ATCC 700819 / NCTC 11168)).